Reading from the N-terminus, the 521-residue chain is Bifunctional purine biosynthesis protein PurH (521 aa).

The 147-residue stretch at 1–147 folds into the MGS-like domain; sequence MAKITRALIS…KNNADVTVVV (147 aa).

It belongs to the PurH family.

It carries out the reaction (6R)-10-formyltetrahydrofolate + 5-amino-1-(5-phospho-beta-D-ribosyl)imidazole-4-carboxamide = 5-formamido-1-(5-phospho-D-ribosyl)imidazole-4-carboxamide + (6S)-5,6,7,8-tetrahydrofolate. It catalyses the reaction IMP + H2O = 5-formamido-1-(5-phospho-D-ribosyl)imidazole-4-carboxamide. The protein operates within purine metabolism; IMP biosynthesis via de novo pathway; 5-formamido-1-(5-phospho-D-ribosyl)imidazole-4-carboxamide from 5-amino-1-(5-phospho-D-ribosyl)imidazole-4-carboxamide (10-formyl THF route): step 1/1. It participates in purine metabolism; IMP biosynthesis via de novo pathway; IMP from 5-formamido-1-(5-phospho-D-ribosyl)imidazole-4-carboxamide: step 1/1. This chain is Bifunctional purine biosynthesis protein PurH, found in Geotalea uraniireducens (strain Rf4) (Geobacter uraniireducens).